A 287-amino-acid polypeptide reads, in one-letter code: Phosphatidylglycerol--prolipoprotein diacylglyceryl transferase (287 aa).

The next 4 helical transmembrane spans lie at 26 to 46 (VAIR…WWLA), 71 to 91 (FLVW…ILFY), 106 to 126 (IWRG…AMIV), and 132 to 152 (GLPV…GLFF). Position 154 (Arg-154) interacts with a 1,2-diacyl-sn-glycero-3-phospho-(1'-sn-glycerol). 3 helical membrane-spanning segments follow: residues 187-207 (SQLY…QVLA), 217-237 (GVIS…VEFF), and 251-271 (WLTM…WAIW).

This sequence belongs to the Lgt family.

It localises to the cell inner membrane. It catalyses the reaction L-cysteinyl-[prolipoprotein] + a 1,2-diacyl-sn-glycero-3-phospho-(1'-sn-glycerol) = an S-1,2-diacyl-sn-glyceryl-L-cysteinyl-[prolipoprotein] + sn-glycerol 1-phosphate + H(+). Its pathway is protein modification; lipoprotein biosynthesis (diacylglyceryl transfer). In terms of biological role, catalyzes the transfer of the diacylglyceryl group from phosphatidylglycerol to the sulfhydryl group of the N-terminal cysteine of a prolipoprotein, the first step in the formation of mature lipoproteins. The protein is Phosphatidylglycerol--prolipoprotein diacylglyceryl transferase of Allorhizobium ampelinum (strain ATCC BAA-846 / DSM 112012 / S4) (Agrobacterium vitis (strain S4)).